Here is a 247-residue protein sequence, read N- to C-terminus: UPF0246 protein CD630_18230 (247 aa).

Belongs to the UPF0246 family.

This is UPF0246 protein CD630_18230 from Clostridioides difficile (strain 630) (Peptoclostridium difficile).